A 65-amino-acid polypeptide reads, in one-letter code: UPF0291 protein BBR47_33060 (65 aa).

It belongs to the UPF0291 family.

It is found in the cytoplasm. The protein is UPF0291 protein BBR47_33060 of Brevibacillus brevis (strain 47 / JCM 6285 / NBRC 100599).